We begin with the raw amino-acid sequence, 603 residues long: Adenine deaminase (603 aa).

Belongs to the metallo-dependent hydrolases superfamily. Adenine deaminase family. Homodimer. Requires Mn(2+) as cofactor.

The enzyme catalyses adenine + H2O + H(+) = hypoxanthine + NH4(+). The sequence is that of Adenine deaminase from Klebsiella pneumoniae (strain 342).